We begin with the raw amino-acid sequence, 466 residues long: Adenosylhomocysteinase (466 aa).

Substrate is bound by residues threonine 57, aspartate 132, and glutamate 192. 193–195 serves as a coordination point for NAD(+); the sequence is TTT. Lysine 222 and aspartate 226 together coordinate substrate. NAD(+)-binding positions include asparagine 227, 256-261, glutamate 279, asparagine 314, 335-337, and asparagine 380; these read GYGDVG and IGH.

This sequence belongs to the adenosylhomocysteinase family. NAD(+) is required as a cofactor.

Its subcellular location is the cytoplasm. It carries out the reaction S-adenosyl-L-homocysteine + H2O = L-homocysteine + adenosine. The protein operates within amino-acid biosynthesis; L-homocysteine biosynthesis; L-homocysteine from S-adenosyl-L-homocysteine: step 1/1. May play a key role in the regulation of the intracellular concentration of adenosylhomocysteine. This is Adenosylhomocysteinase from Rhizobium meliloti (strain 1021) (Ensifer meliloti).